The primary structure comprises 207 residues: Large ribosomal subunit protein uL4 (207 aa).

The interval 48–87 (THAVKNRSAVSGGGKKPWRQKGTGRARQGSIRSPQFRGGG) is disordered.

This sequence belongs to the universal ribosomal protein uL4 family. Part of the 50S ribosomal subunit.

Functionally, one of the primary rRNA binding proteins, this protein initially binds near the 5'-end of the 23S rRNA. It is important during the early stages of 50S assembly. It makes multiple contacts with different domains of the 23S rRNA in the assembled 50S subunit and ribosome. Its function is as follows. Forms part of the polypeptide exit tunnel. The sequence is that of Large ribosomal subunit protein uL4 from Limosilactobacillus reuteri subsp. reuteri (strain JCM 1112) (Lactobacillus reuteri).